Consider the following 151-residue polypeptide: SsrA-binding protein (151 aa).

The protein belongs to the SmpB family.

Its subcellular location is the cytoplasm. Functionally, required for rescue of stalled ribosomes mediated by trans-translation. Binds to transfer-messenger RNA (tmRNA), required for stable association of tmRNA with ribosomes. tmRNA and SmpB together mimic tRNA shape, replacing the anticodon stem-loop with SmpB. tmRNA is encoded by the ssrA gene; the 2 termini fold to resemble tRNA(Ala) and it encodes a 'tag peptide', a short internal open reading frame. During trans-translation Ala-aminoacylated tmRNA acts like a tRNA, entering the A-site of stalled ribosomes, displacing the stalled mRNA. The ribosome then switches to translate the ORF on the tmRNA; the nascent peptide is terminated with the 'tag peptide' encoded by the tmRNA and targeted for degradation. The ribosome is freed to recommence translation, which seems to be the essential function of trans-translation. The polypeptide is SsrA-binding protein (Lactobacillus acidophilus (strain ATCC 700396 / NCK56 / N2 / NCFM)).